Consider the following 320-residue polypeptide: Epoxidase atD (320 aa).

N245 and N299 each carry an N-linked (GlcNAc...) asparagine glycan.

The protein operates within secondary metabolite biosynthesis. Its function is as follows. Epoxidase; part of the gene cluster that mediates the biosynthesis of terreic acid, a quinone epoxide inhibitor of Bruton's tyrosine kinase. The first step of the pathway is the synthesis of 6-methylsalicylic acid (6-MSA) by the 6-methylsalicylic acid synthase atX. In the biosynthesis of 6-MSA, atX utilizes one acetyl-CoA and three malonyl-CoAs as its substrates and catalyzes a series of programmed reactions including Claisen condensation, reduction, aldol cyclization, and the hydrolytic cleavage that yields 6-MSA. The 6-methylsalicylate 1-monooxygenase atA then catalyzes the decarboxylative hydroxylation of 6-MSA to 3-methylcatechol. The next step is the conversion of 3-methylcatechol to 3-methyl-1,2,4-benzenetriol by cytochrome P450 monooxygenase atE, which is enhanced by cytochrome P450 monooxygenase atG. Then, the epoxidase atD catalyzes the epoxidation and hydroxyl oxidation of 3-methyl-1,2,4-benzenetriol to terremutin. Lastly, GMC oxidoreductase atC oxidizes terremutin to terreic acid. This chain is Epoxidase atD, found in Aspergillus terreus (strain NIH 2624 / FGSC A1156).